We begin with the raw amino-acid sequence, 260 residues long: E3 ubiquitin-protein ligase SRFP1 (260 aa).

The CHY-type zinc finger occupies 11–80 (FGRMGFGCKH…VAQVCYNCGV (70 aa)). Zn(2+)-binding residues include Cys18, His20, Cys31, Cys32, Cys38, Cys41, His42, His50, Cys62, Cys65, Cys75, Cys78, Cys87, Cys90, His103, Cys104, Cys107, Cys110, His120, Cys121, Cys124, Cys127, His136, and Cys138. Residues 82–146 (MGEYFCSACK…CCIENSMKNN (65 aa)) form a CTCHY-type zinc finger. An RING-type; atypical zinc finger spans residues 147–190 (CPICYEYLFDSLRETSVLRCGHTMHLQCFHEMLKHDKFSCPICS).

In terms of tissue distribution, expressed in roots, leaves, nodes and panicles.

The protein resides in the nucleus. It localises to the cytoplasm. The catalysed reaction is S-ubiquitinyl-[E2 ubiquitin-conjugating enzyme]-L-cysteine + [acceptor protein]-L-lysine = [E2 ubiquitin-conjugating enzyme]-L-cysteine + N(6)-ubiquitinyl-[acceptor protein]-L-lysine.. Its pathway is protein modification; protein ubiquitination. Possesses E3 ubiquitin-protein ligase activity in vitro. Possesses transactivation activity in yeast cells. May modulate abiotic stress responses by negatively regulating antioxidant enzymes-mediated reactive oxygen species (ROS) removal. The chain is E3 ubiquitin-protein ligase SRFP1 from Oryza sativa subsp. japonica (Rice).